We begin with the raw amino-acid sequence, 705 residues long: Phycobiliprotein ApcE (705 aa).

The phycobilin-like 1 stretch occupies residues 18–76; the sequence is QTVPGSTIVQAEQQDRFPQQGELRELSSYFQSGLKRLAIAEIITRNSDTIVSRAANRIF. Positions 77 to 145 are phycobilin-like loop; the sequence is VGGSPLAYIE…VRIPSGFRPI (69 aa). Positions 146 to 238 are phycobilin-like 2; sequence NVARYGPRNM…YFDVLIREFE (93 aa). Residue Cys-196 coordinates (2R,3E)-phycocyanobilin. PBS-linker domains are found at residues 253 to 433 and 514 to 691; these read DQQG…FVKV and KIFK…SLRP. The interval 685-705 is disordered; sequence VKASLRPAAGAQERRPEVGRR. Residues 696–705 are compositionally biased toward basic and acidic residues; it reads QERRPEVGRR.

The protein belongs to the phycobilisome linker protein family. In terms of assembly, phycobilisomes of this organism are composed of a two cylinder core, from which six rods radiate. The core is mainly composed of allophycocyanin alpha and beta chains, and of three minor components: the allophycocyanin alpha-B chain, a 18.3 kDa polypeptide, and the anchor polypeptide L-CM. In terms of processing, contains one covalently linked bilin chromophore. This protein autochromophorylates.

The protein localises to the cellular thylakoid membrane. Its function is as follows. This protein is postulated to act both as terminal energy acceptor (by its phycobilin-like domains) and as a linker polypeptide (by its repeats and arms) that stabilizes the phycobilisome core architecture. Has intrinsic bilin lyase activity. The sequence is that of Phycobiliprotein ApcE (apcE) from Synechococcus sp. (strain ATCC 27144 / PCC 6301 / SAUG 1402/1) (Anacystis nidulans).